Here is a 1709-residue protein sequence, read N- to C-terminus: Sialoadhesin (1709 aa).

Positions 1-19 (MGFLPKLLLLASFFPAGQA) are cleaved as a signal peptide. Positions 20-136 (SWGVSSPQDV…DVKGTLVTVT (117 aa)) constitute an Ig-like V-type domain. At 20-1641 (SWGVSSPQDV…ALHRLHQFQQ (1622 aa)) the chain is on the extracellular side. 4 disulfide bridges follow: Cys36–Cys166, Cys41–Cys98, Cys160–Cys217, and Cys262–Cys305. Residues Tyr63, Arg116, and 122-126 (VNRWS) contribute to the N-acetylneuraminate site. 12 Ig-like C2-type domains span residues 139–233 (PRVP…IHLQ), 238–320 (PKGV…PPIS), 326–405 (AEVQ…GPVS), 411–507 (PPLT…LDFH), 511–593 (ARLL…AVLT), 601–705 (PTFT…ATFN), 708–785 (ATVL…AQLS), 799–894 (PKLS…FQVR), 898–977 (VQVS…APIS), 984–1083 (PRHV…ADFD), 1085–1165 (QAVN…RPIT), and 1176–1248 (RLTY…SPLG). An N-linked (GlcNAc...) asparagine glycan is attached at Asn159. Asn265 and Asn339 each carry an N-linked (GlcNAc...) asparagine glycan. Intrachain disulfides connect Cys346/Cys390 and Cys433/Cys491. Asn499 is a glycosylation site (N-linked (GlcNAc...) asparagine). 2 disulfides stabilise this stretch: Cys531–Cys575 and Cys624–Cys689. Residues Asn697, Asn726, Asn730, and Asn741 are each glycosylated (N-linked (GlcNAc...) asparagine). Disulfide bonds link Cys729/Cys774 and Cys817/Cys876. A glycan (N-linked (GlcNAc...) asparagine) is linked at Asn886. Disulfide bonds link Cys916/Cys960 and Cys1005/Cys1067. Asn1104 and Asn1138 each carry an N-linked (GlcNAc...) asparagine glycan. 2 disulfides stabilise this stretch: Cys1107-Cys1149 and Cys1193-Cys1241. The N-linked (GlcNAc...) asparagine glycan is linked to Asn1251. Ig-like C2-type domains follow at residues 1259–1341 (EGVR…AALQ), 1350–1442 (VLSS…RLQV), 1445–1528 (ARVV…VMLR), and 1536–1631 (PTMM…FGVR). Cystine bridges form between Cys1281–Cys1324 and Cys1367–Cys1425. 2 N-linked (GlcNAc...) asparagine glycosylation sites follow: Asn1462 and Asn1476. Intrachain disulfides connect Cys1465/Cys1511 and Cys1554/Cys1613. The helical transmembrane segment at 1642-1662 (LLWVLGLLVGLLLLLLGLGAC) threads the bilayer. The Cytoplasmic segment spans residues 1663 to 1709 (YTWRRRRVCKQSMGENSVEMAFQKETTQLIDPDAATCETSTCAPPLG).

The protein belongs to the immunoglobulin superfamily. SIGLEC (sialic acid binding Ig-like lectin) family. As to quaternary structure, interacts with TYROBP. Interacts with CLEC10A. In terms of tissue distribution, expressed by macrophages in various tissues. High levels are found in spleen, lymph node, perivascular macrophages in brain and lower levels in bone marrow, liver Kupffer cells and lamina propria of colon and lung. Also expressed by inflammatory macrophages in rheumatoid arthritis.

The protein resides in the cell membrane. The protein localises to the secreted. In terms of biological role, macrophage-restricted adhesion molecule that mediates sialic-acid dependent binding to lymphocytes, including granulocytes, monocytes, natural killer cells, B-cells and CD8 T-cells. Plays a crucial role in limiting bacterial dissemination by engaging sialylated bacteria to promote effective phagocytosis and antigen presentation for the adaptive immune response. Mediates the uptake of various enveloped viruses via sialic acid recognition and subsequently induces the formation of intracellular compartments filled with virions (VCCs). In turn, enhances macrophage-to-T-cell transmission of several viruses including HIV-1 or SARS-CoV-2. Acts as an endocytic receptor mediating clathrin dependent endocytosis. Preferentially binds to alpha-2,3-linked sialic acid. Binds to SPN/CD43 on T-cells. May play a role in hemopoiesis. Plays a role in the inhibition of antiviral innate immune by promoting TBK1 degradation via TYROBP and TRIM27-mediated ubiquitination. Its function is as follows. (Microbial infection) Facilitates viral cytoplasmic entry into activated dendritic cells via recognition of sialylated gangliosides pesent on viral membrane. The protein is Sialoadhesin (SIGLEC1) of Homo sapiens (Human).